The following is a 138-amino-acid chain: Transcription antitermination protein NusB (138 aa).

It belongs to the NusB family.

Involved in transcription antitermination. Required for transcription of ribosomal RNA (rRNA) genes. Binds specifically to the boxA antiterminator sequence of the ribosomal RNA (rrn) operons. The chain is Transcription antitermination protein NusB from Leptospira borgpetersenii serovar Hardjo-bovis (strain JB197).